A 340-amino-acid polypeptide reads, in one-letter code: Glyceraldehyde-3-phosphate dehydrogenase (340 aa).

NAD(+) contacts are provided by residues 11-12 (TI) and Gly109. 138–140 (SCN) contributes to the D-glyceraldehyde 3-phosphate binding site. Residue Cys139 is the Nucleophile of the active site. NAD(+) is bound at residue Arg167. A D-glyceraldehyde 3-phosphate-binding site is contributed by 193-194 (HA). Gln300 contributes to the NAD(+) binding site.

The protein belongs to the glyceraldehyde-3-phosphate dehydrogenase family. As to quaternary structure, homotetramer.

It localises to the cytoplasm. It carries out the reaction D-glyceraldehyde 3-phosphate + phosphate + NADP(+) = (2R)-3-phospho-glyceroyl phosphate + NADPH + H(+). It catalyses the reaction D-glyceraldehyde 3-phosphate + phosphate + NAD(+) = (2R)-3-phospho-glyceroyl phosphate + NADH + H(+). It functions in the pathway carbohydrate degradation; glycolysis; pyruvate from D-glyceraldehyde 3-phosphate: step 1/5. The polypeptide is Glyceraldehyde-3-phosphate dehydrogenase (Saccharolobus islandicus (strain Y.N.15.51 / Yellowstone #2) (Sulfolobus islandicus)).